We begin with the raw amino-acid sequence, 214 residues long: Charged multivesicular body protein 2b-B (214 aa).

Residues 25–55 are a coiled coil; it reads QRAITRDRAALEKQEKQLEMEIKKMAKTGNK. The interval 178-200 is disordered; it reads MAKAPSAAKGLPSTSAAKSKGIS. The MIT-interacting motif signature appears at 202–212; that stretch reads EEIERQLKALG.

Belongs to the SNF7 family. As to quaternary structure, probable core component of the endosomal sorting required for transport complex III (ESCRT-III). ESCRT-III components are thought to multimerize to form a flat lattice on the perimeter membrane of the endosome.

The protein resides in the cytoplasm. The protein localises to the cytosol. It localises to the late endosome membrane. Functionally, probable core component of the endosomal sorting required for transport complex III (ESCRT-III) which is involved in multivesicular bodies (MVBs) formation and sorting of endosomal cargo proteins into MVBs. MVBs contain intraluminal vesicles (ILVs) that are generated by invagination and scission from the limiting membrane of the endosome and mostly are delivered to lysosomes enabling degradation of membrane proteins, such as stimulated growth factor receptors, lysosomal enzymes and lipids. In Xenopus laevis (African clawed frog), this protein is Charged multivesicular body protein 2b-B (chmp2b-b).